A 118-amino-acid chain; its full sequence is UPF0251 protein TTE1845 (118 aa).

It belongs to the UPF0251 family.

This Caldanaerobacter subterraneus subsp. tengcongensis (strain DSM 15242 / JCM 11007 / NBRC 100824 / MB4) (Thermoanaerobacter tengcongensis) protein is UPF0251 protein TTE1845.